The primary structure comprises 211 residues: Probable endo-1,4-beta-xylanase 5 (211 aa).

The signal sequence occupies residues 1–16 (MKVTAAFASLLLTAFA). The GH11 domain occupies 19–210 (APEPVLVSRS…GAGSASVTIS (192 aa)). Residue Glu-106 is the Nucleophile of the active site. Glu-197 acts as the Proton donor in catalysis.

This sequence belongs to the glycosyl hydrolase 11 (cellulase G) family.

The protein resides in the secreted. It carries out the reaction Endohydrolysis of (1-&gt;4)-beta-D-xylosidic linkages in xylans.. It functions in the pathway glycan degradation; xylan degradation. Its function is as follows. Endo-1,4-beta-xylanase involved in the hydrolysis of xylan, a major structural heterogeneous polysaccharide found in plant biomass representing the second most abundant polysaccharide in the biosphere, after cellulose. This chain is Probable endo-1,4-beta-xylanase 5 (XYN5), found in Aspergillus niger (strain ATCC MYA-4892 / CBS 513.88 / FGSC A1513).